Reading from the N-terminus, the 275-residue chain is NH(3)-dependent NAD(+) synthetase (275 aa).

Residue 46-53 participates in ATP binding; it reads GISGGQDS. Residue Asp52 coordinates Mg(2+). Residue Arg140 coordinates deamido-NAD(+). Thr160 is a binding site for ATP. Glu165 serves as a coordination point for Mg(2+). Lys173 and Asp180 together coordinate deamido-NAD(+). Residues Lys189 and Thr211 each contribute to the ATP site. 260–261 is a binding site for deamido-NAD(+); that stretch reads HK.

The protein belongs to the NAD synthetase family. Homodimer.

The catalysed reaction is deamido-NAD(+) + NH4(+) + ATP = AMP + diphosphate + NAD(+) + H(+). Its pathway is cofactor biosynthesis; NAD(+) biosynthesis; NAD(+) from deamido-NAD(+) (ammonia route): step 1/1. Catalyzes the ATP-dependent amidation of deamido-NAD to form NAD. Uses ammonia as a nitrogen source. This Enterobacter sp. (strain 638) protein is NH(3)-dependent NAD(+) synthetase.